A 220-amino-acid polypeptide reads, in one-letter code: 7-cyano-7-deazaguanine synthase 1 (220 aa).

10–20 (FSGGIDSTVLL) contacts ATP. Positions 183, 191, 194, and 197 each coordinate Zn(2+).

It belongs to the QueC family. As to quaternary structure, homodimer. It depends on Zn(2+) as a cofactor.

The catalysed reaction is 7-carboxy-7-deazaguanine + NH4(+) + ATP = 7-cyano-7-deazaguanine + ADP + phosphate + H2O + H(+). It functions in the pathway purine metabolism; 7-cyano-7-deazaguanine biosynthesis. In terms of biological role, catalyzes the ATP-dependent conversion of 7-carboxy-7-deazaguanine (CDG) to 7-cyano-7-deazaguanine (preQ(0)). The polypeptide is 7-cyano-7-deazaguanine synthase 1 (Desulfitobacterium hafniense (strain Y51)).